A 289-amino-acid chain; its full sequence is Glyoxylate/succinic semialdehyde reductase 1 (289 aa).

Residue methionine 1 is modified to N-acetylmethionine. Residues 4-18 and threonine 95 contribute to the NADP(+) site; that span reads GFLGLGIMGKAMSMN. Lysine 170 is an active-site residue. Lysine 238 contributes to the NADP(+) binding site.

This sequence belongs to the HIBADH-related family. NP60 subfamily.

It is found in the cytoplasm. Its subcellular location is the cytosol. It catalyses the reaction glycolate + NADP(+) = glyoxylate + NADPH + H(+). It carries out the reaction 4-hydroxybutanoate + NADP(+) = succinate semialdehyde + NADPH + H(+). The ratio of NADPH/NADP(+) may regulate enzymatic activity. Functionally, catalyzes the NADPH-dependent reduction of glyoxylate to glycolate as well as succinic semialdehyde (SSA) to gamma-hydroxybutyrate in vitro. May function in redox homeostasis and play a role in oxidative stress tolerance by detoxifying glyoxylate and SSA generated in glycolate metabolism and GABA metabolism, respectively. The polypeptide is Glyoxylate/succinic semialdehyde reductase 1 (GLYR1) (Arabidopsis thaliana (Mouse-ear cress)).